Consider the following 141-residue polypeptide: Putative antiporter subunit mnhB2 (141 aa).

4 helical membrane passes run 10-30 (TVTKIVVFILLTFGFYLFLAG), 35-55 (GGGFIGGLVFSSAFLLMFLAF), 70-90 (ILMICGSLLSFLTAVVPMFFG), and 116-136 (VFEAGIVLAVVGVVVTVMLSI).

This sequence belongs to the CPA3 antiporters (TC 2.A.63) subunit B family. In terms of assembly, may form a heterooligomeric complex that consists of seven subunits: mnhA2, mnhB2, mnhC2, mnhD2, mnhE2, mnhF2 and mnhG2.

The protein resides in the cell membrane. The sequence is that of Putative antiporter subunit mnhB2 (mnhB2) from Staphylococcus saprophyticus subsp. saprophyticus (strain ATCC 15305 / DSM 20229 / NCIMB 8711 / NCTC 7292 / S-41).